Here is a 139-residue protein sequence, read N- to C-terminus: D-ribose pyranase (139 aa).

The active-site Proton donor is the His20. Substrate is bound by residues Asp28, His106, and 128–130 (YAN).

This sequence belongs to the RbsD / FucU family. RbsD subfamily. As to quaternary structure, homodecamer.

It localises to the cytoplasm. It catalyses the reaction beta-D-ribopyranose = beta-D-ribofuranose. Its pathway is carbohydrate metabolism; D-ribose degradation; D-ribose 5-phosphate from beta-D-ribopyranose: step 1/2. Catalyzes the interconversion of beta-pyran and beta-furan forms of D-ribose. This chain is D-ribose pyranase, found in Histophilus somni (strain 129Pt) (Haemophilus somnus).